The chain runs to 511 residues: Bifunctional purine biosynthesis protein PurH (511 aa).

One can recognise an MGS-like domain in the interval 1–146; the sequence is MGRLALISVT…KNFAHLTVIS (146 aa).

The protein belongs to the PurH family.

The enzyme catalyses (6R)-10-formyltetrahydrofolate + 5-amino-1-(5-phospho-beta-D-ribosyl)imidazole-4-carboxamide = 5-formamido-1-(5-phospho-D-ribosyl)imidazole-4-carboxamide + (6S)-5,6,7,8-tetrahydrofolate. The catalysed reaction is IMP + H2O = 5-formamido-1-(5-phospho-D-ribosyl)imidazole-4-carboxamide. The protein operates within purine metabolism; IMP biosynthesis via de novo pathway; 5-formamido-1-(5-phospho-D-ribosyl)imidazole-4-carboxamide from 5-amino-1-(5-phospho-D-ribosyl)imidazole-4-carboxamide (10-formyl THF route): step 1/1. It functions in the pathway purine metabolism; IMP biosynthesis via de novo pathway; IMP from 5-formamido-1-(5-phospho-D-ribosyl)imidazole-4-carboxamide: step 1/1. The protein is Bifunctional purine biosynthesis protein PurH of Microcystis aeruginosa (strain NIES-843 / IAM M-2473).